The primary structure comprises 78 residues: Translational regulator CsrA (78 aa).

It belongs to the CsrA/RsmA family. As to quaternary structure, homodimer; the beta-strands of each monomer intercalate to form a hydrophobic core, while the alpha-helices form wings that extend away from the core.

It localises to the cytoplasm. In terms of biological role, a translational regulator that binds mRNA to regulate translation initiation and/or mRNA stability. Usually binds in the 5'-UTR at or near the Shine-Dalgarno sequence preventing ribosome-binding, thus repressing translation. Its main target seems to be the major flagellin gene, while its function is anatagonized by FliW. The sequence is that of Translational regulator CsrA from Geobacter metallireducens (strain ATCC 53774 / DSM 7210 / GS-15).